We begin with the raw amino-acid sequence, 354 residues long: Uroporphyrinogen decarboxylase (354 aa).

Substrate-binding positions include 27–31 (RQAGR), aspartate 77, tyrosine 154, threonine 209, and histidine 327.

This sequence belongs to the uroporphyrinogen decarboxylase family. Homodimer.

It localises to the cytoplasm. It catalyses the reaction uroporphyrinogen III + 4 H(+) = coproporphyrinogen III + 4 CO2. Its pathway is porphyrin-containing compound metabolism; protoporphyrin-IX biosynthesis; coproporphyrinogen-III from 5-aminolevulinate: step 4/4. In terms of biological role, catalyzes the decarboxylation of four acetate groups of uroporphyrinogen-III to yield coproporphyrinogen-III. The polypeptide is Uroporphyrinogen decarboxylase (Psychromonas ingrahamii (strain DSM 17664 / CCUG 51855 / 37)).